A 152-amino-acid polypeptide reads, in one-letter code: Small ribosomal subunit protein bS16 (152 aa).

A compositionally biased stretch (basic and acidic residues) spans 118–130 (AEKHKAKASEKKA). The disordered stretch occupies residues 118 to 152 (AEKHKAKASEKKAAAAASADEAGSAAADDAEGSES). Positions 131–144 (AAAASADEAGSAAA) are enriched in low complexity.

The protein belongs to the bacterial ribosomal protein bS16 family.

This Beutenbergia cavernae (strain ATCC BAA-8 / DSM 12333 / CCUG 43141 / JCM 11478 / NBRC 16432 / NCIMB 13614 / HKI 0122) protein is Small ribosomal subunit protein bS16.